Reading from the N-terminus, the 219-residue chain is Ribose-5-phosphate isomerase A (219 aa).

Residues 28 to 31 (TGST), 81 to 84 (DGAD), and 94 to 97 (KGGG) each bind substrate. Glutamate 103 acts as the Proton acceptor in catalysis. Residue lysine 121 participates in substrate binding.

This sequence belongs to the ribose 5-phosphate isomerase family. In terms of assembly, homodimer.

The catalysed reaction is aldehydo-D-ribose 5-phosphate = D-ribulose 5-phosphate. It functions in the pathway carbohydrate degradation; pentose phosphate pathway; D-ribose 5-phosphate from D-ribulose 5-phosphate (non-oxidative stage): step 1/1. Its function is as follows. Catalyzes the reversible conversion of ribose-5-phosphate to ribulose 5-phosphate. The protein is Ribose-5-phosphate isomerase A of Shewanella sp. (strain MR-4).